We begin with the raw amino-acid sequence, 396 residues long: Lipopolysaccharide assembly protein B (396 aa).

Residues 1 to 20 (MIELLFLLLPIAAAYGWYMG) form a helical membrane-spanning segment. Residues 21–396 (RRSAKKDQDD…IKPVSNQEHN (376 aa)) lie on the Cytoplasmic side of the membrane. TPR repeat units follow at residues 35–68 (LSRD…QEIE), 77–109 (FEAE…SPNY), 149–182 (ENAL…KPQE), and 221–254 (VRAS…NPDY). Fe cation contacts are provided by cysteine 364, cysteine 367, cysteine 378, and cysteine 381.

The protein belongs to the LapB family.

It is found in the cell inner membrane. Its function is as follows. Modulates cellular lipopolysaccharide (LPS) levels by regulating LpxC, which is involved in lipid A biosynthesis. May act by modulating the proteolytic activity of FtsH towards LpxC. May also coordinate assembly of proteins involved in LPS synthesis at the plasma membrane. This chain is Lipopolysaccharide assembly protein B, found in Haemophilus influenzae (strain ATCC 51907 / DSM 11121 / KW20 / Rd).